Reading from the N-terminus, the 414-residue chain is MYHRHLLVEQTDPELFAAIEAENARQEQHIELIASENYASPAVMWAQGTQLTNKYAEGYPGKRYYGGCEHVDVAEQLAIDRVKKLFGAEAANVQPHCGASANEAVFLAFLKPGDTIMGMSLAEGGHLTHGMSLNMSGKWFNAVSYGLDADEVIDYEAMEKKAHATRPRLIIAGASAYSLHIDFARFAQVAKDVGAIFMVDMAHYAGLIAAGLYPNPVPHADVVTSTTHKSLRGPRGGIILMRAAHEKAIHSAIFPGLQGGPLMHVIAAKAVAFQEALQPGFRLYQEQVLKNAKVLAQTLAARGLRIVSGGTQSHMMLVDLRAKGITGKEAEAVLGAAHMTINKNAIPNDPEKPMVTSGVRIGTPAMTTRGFKEEQARSTAELIADLLDKPRDAANIAAVRAKVDALTARFPVYG.

Residues leucine 121 and 125–127 (GHL) contribute to the (6S)-5,6,7,8-tetrahydrofolate site. Lysine 229 carries the post-translational modification N6-(pyridoxal phosphate)lysine.

Belongs to the SHMT family. In terms of assembly, homodimer. Pyridoxal 5'-phosphate serves as cofactor.

It is found in the cytoplasm. It carries out the reaction (6R)-5,10-methylene-5,6,7,8-tetrahydrofolate + glycine + H2O = (6S)-5,6,7,8-tetrahydrofolate + L-serine. It functions in the pathway one-carbon metabolism; tetrahydrofolate interconversion. It participates in amino-acid biosynthesis; glycine biosynthesis; glycine from L-serine: step 1/1. Its function is as follows. Catalyzes the reversible interconversion of serine and glycine with tetrahydrofolate (THF) serving as the one-carbon carrier. This reaction serves as the major source of one-carbon groups required for the biosynthesis of purines, thymidylate, methionine, and other important biomolecules. Also exhibits THF-independent aldolase activity toward beta-hydroxyamino acids, producing glycine and aldehydes, via a retro-aldol mechanism. This chain is Serine hydroxymethyltransferase, found in Verminephrobacter eiseniae (strain EF01-2).